A 72-amino-acid chain; its full sequence is MDLWVVILVGVVALLAGVALGFFIARKYMMSYLKKNPPINEQMLRMMMMQMGMKPSQKKINQMMKAMNNQAK.

A helical transmembrane segment spans residues 4–24 (WVVILVGVVALLAGVALGFFI).

The protein belongs to the UPF0154 family.

It is found in the cell membrane. The sequence is that of UPF0154 protein BPUM_1692 from Bacillus pumilus (strain SAFR-032).